Here is a 468-residue protein sequence, read N- to C-terminus: Mitochondrial distribution and morphology protein 10 (468 aa).

This sequence belongs to the MDM10 family. In terms of assembly, component of the ER-mitochondria encounter structure (ERMES) or MDM complex, composed of MMM1, MDM10, MDM12 and MDM34. Associates with the mitochondrial outer membrane sorting assembly machinery SAM(core) complex.

The protein localises to the mitochondrion outer membrane. Functionally, component of the ERMES/MDM complex, which serves as a molecular tether to connect the endoplasmic reticulum and mitochondria. Components of this complex are involved in the control of mitochondrial shape and protein biogenesis and may function in phospholipid exchange. MDM10 is involved in the late assembly steps of the general translocase of the mitochondrial outer membrane (TOM complex). Functions in the TOM40-specific route of the assembly of outer membrane beta-barrel proteins, including the association of TOM40 with the receptor TOM22 and small TOM proteins. Can associate with the SAM(core) complex as well as the MDM12-MMM1 complex, both involved in late steps of the major beta-barrel assembly pathway, that is responsible for biogenesis of all outer membrane beta-barrel proteins. May act as a switch that shuttles between both complexes and channels precursor proteins into the TOM40-specific pathway. Plays a role in mitochondrial morphology and in the inheritance of mitochondria. This is Mitochondrial distribution and morphology protein 10 from Blastomyces gilchristii (strain SLH14081) (Blastomyces dermatitidis).